Here is a 707-residue protein sequence, read N- to C-terminus: Ribosomal RNA large subunit methyltransferase K/L (707 aa).

One can recognise a THUMP domain in the interval Val-44–Leu-155.

It belongs to the methyltransferase superfamily. RlmKL family.

The protein localises to the cytoplasm. The enzyme catalyses guanosine(2445) in 23S rRNA + S-adenosyl-L-methionine = N(2)-methylguanosine(2445) in 23S rRNA + S-adenosyl-L-homocysteine + H(+). It catalyses the reaction guanosine(2069) in 23S rRNA + S-adenosyl-L-methionine = N(2)-methylguanosine(2069) in 23S rRNA + S-adenosyl-L-homocysteine + H(+). Specifically methylates the guanine in position 2445 (m2G2445) and the guanine in position 2069 (m7G2069) of 23S rRNA. The chain is Ribosomal RNA large subunit methyltransferase K/L from Legionella pneumophila (strain Corby).